Consider the following 537-residue polypeptide: MKRDHQEISGSGSNPAESSSIKGKLWEEDPDAGGMDDELLAVLGYKVRSSDMADVAQKLEMLEKVMGTAQEDGISQLGDTVHFNPSDLSGWVQNLLIEFNGSTTTPDPNFNDDSEYDLRAIPGVAAYPPVKSDPGLEITRKRAKTESSSSSSSTTTRPVVLIDSQEAGVRLVHTLMACAEAVQQDNLKLADALVKHIGLLASSQTGAMRKVATYFAEALARRIYRIFPPDSLDPSYNDKLQIPFYETCPYLKFAHFTANQAILEAFSMASRVHVIDFGLKQGMQWPALMQALALRPGGPPAFRLTGIGPPQPDNTDALQQVGWKLAQLAERIGIEFEFRGFVANSLADLEPEMLDIRPPEIEVVAVNAVFELHPLLARPGGIEKVVSSIKAMKPKIVTVVEQEANHNGPVFLDRFTEALHYYSTLFDSLEGSGVAPASQDLAMSELYLGRQICNVVACEGMDRVERHEPLTQWRTRMETAGVSPVHLGSNAYKQASMLLALFASGDGYRVEENNGCLMLGWHTRPLIAHLGLATRWY.

A disordered region spans residues 1-33 (MKRDHQEISGSGSNPAESSSIKGKLWEEDPDAG). Positions 9 to 20 (SGSGSNPAESSS) are enriched in low complexity. The DELLA motif signature appears at 37–41 (DELLA). The interval 131–157 (KSDPGLEITRKRAKTESSSSSSSTTTR) is disordered. Over residues 147 to 156 (SSSSSSSTTT) the composition is skewed to low complexity. The GRAS domain maps to 162–533 (IDSQEAGVRL…RPLIAHLGLA (372 aa)). The tract at residues 169 to 223 (VRLVHTLMACAEAVQQDNLKLADALVKHIGLLASSQTGAMRKVATYFAEALARRI) is leucine repeat I (LRI). A VHIID region spans residues 241–306 (QIPFYETCPY…GGPPAFRLTG (66 aa)). The VHIID motif lies at 272–276 (VHVID). The leucine repeat II (LRII) stretch occupies residues 320-352 (QVGWKLAQLAERIGIEFEFRGFVANSLADLEPE). Residues 364–454 (VAVNAVFELH…ELYLGRQICN (91 aa)) are PFYRE. Residues 372-376 (LHPLL) carry the LXXLL motif motif. The interval 457-533 (ACEGMDRVER…RPLIAHLGLA (77 aa)) is SAW.

The protein belongs to the GRAS family. DELLA subfamily. Phosphorylated. Post-translationally, ubiquitinated. Upon GA application it is ubiquitinated, leading to its subsequent degradation.

Its subcellular location is the nucleus. Its function is as follows. Probable transcriptional regulator that acts as a repressor of the gibberellin (GA) signaling pathway. Probably acts by participating in large multiprotein complexes that represses transcription of GA-inducible genes. Upon GA application, it is degraded by the proteasome, allowing the GA signaling pathway. The polypeptide is DELLA protein GAI (GAI) (Gossypium hirsutum (Upland cotton)).